Reading from the N-terminus, the 396-residue chain is Polygalacturonase (396 aa).

Positions 1–22 (MDLKFKVHFALVLLFLAHFGES) are cleaved as a signal peptide. 6 N-linked (GlcNAc...) asparagine glycosylation sites follow: asparagine 143, asparagine 151, asparagine 174, asparagine 181, asparagine 203, and asparagine 208. 2 PbH1 repeats span residues 172 to 198 (CKNL…HVSR) and 199 to 220 (SSSV…SVGD). Aspartate 213 serves as the catalytic Proton donor. An intrachain disulfide couples cysteine 215 to cysteine 232. Histidine 236 is an active-site residue. PbH1 repeat units follow at residues 252–273 (VVGV…RIKT), 282–303 (VNDV…VIDQ), and 316–356 (PSQV…EVGD). Residues asparagine 259 and asparagine 294 are each glycosylated (N-linked (GlcNAc...) asparagine). The tract at residues 364-396 (KEGPAKSSCENIKPSLKGKQNPPVCTASAASSS) is disordered. Cysteine 372 and cysteine 388 form a disulfide bridge.

Belongs to the glycosyl hydrolase 28 family. As to expression, pollen.

It localises to the secreted. Its subcellular location is the cell wall. The enzyme catalyses (1,4-alpha-D-galacturonosyl)n+m + H2O = (1,4-alpha-D-galacturonosyl)n + (1,4-alpha-D-galacturonosyl)m.. In terms of biological role, may function in depolymerizing pectin during pollen development, germination, and tube growth. The chain is Polygalacturonase (PG1) from Nicotiana tabacum (Common tobacco).